Consider the following 118-residue polypeptide: V-type proton ATPase subunit F (118 aa).

Belongs to the V-ATPase F subunit family. V-ATPase is a heteromultimeric enzyme composed of a peripheral catalytic V1 complex (components A to H) attached to an integral membrane V0 proton pore complex (components: a, c, c', c'', d, e, f and VOA1).

The protein localises to the vacuole membrane. Its function is as follows. Subunit of the V1 complex of vacuolar(H+)-ATPase (V-ATPase), a multisubunit enzyme composed of a peripheral complex (V1) that hydrolyzes ATP and a membrane integral complex (V0) that translocates protons. V-ATPase is responsible for acidifying and maintaining the pH of intracellular compartments. The chain is V-type proton ATPase subunit F from Saccharomyces cerevisiae (strain ATCC 204508 / S288c) (Baker's yeast).